A 253-amino-acid chain; its full sequence is Triosephosphate isomerase, cytosolic (253 aa).

Substrate is bound by residues Asn10 and Lys12. His96 serves as the catalytic Electrophile. Glu166 acts as the Proton acceptor in catalysis.

Belongs to the triosephosphate isomerase family. As to quaternary structure, homodimer. Starchy endosperm.

It is found in the cytoplasm. It carries out the reaction D-glyceraldehyde 3-phosphate = dihydroxyacetone phosphate. It participates in carbohydrate biosynthesis; gluconeogenesis. It functions in the pathway carbohydrate degradation; glycolysis; D-glyceraldehyde 3-phosphate from glycerone phosphate: step 1/1. The polypeptide is Triosephosphate isomerase, cytosolic (Hordeum vulgare (Barley)).